A 308-amino-acid polypeptide reads, in one-letter code: tRNA pseudouridine synthase B (308 aa).

The active-site Nucleophile is the aspartate 45.

Belongs to the pseudouridine synthase TruB family. Type 1 subfamily.

It catalyses the reaction uridine(55) in tRNA = pseudouridine(55) in tRNA. Functionally, responsible for synthesis of pseudouridine from uracil-55 in the psi GC loop of transfer RNAs. In Gloeothece citriformis (strain PCC 7424) (Cyanothece sp. (strain PCC 7424)), this protein is tRNA pseudouridine synthase B.